The primary structure comprises 320 residues: GTP 3',8-cyclase (320 aa).

The Radical SAM core domain occupies 4 to 226; it reads TFQRSINYMR…PIITDATSPA (223 aa). Residue Arg-13 coordinates GTP. Residues Cys-20 and Cys-24 each contribute to the [4Fe-4S] cluster site. Tyr-26 provides a ligand contact to S-adenosyl-L-methionine. Cys-27 contacts [4Fe-4S] cluster. Arg-63 provides a ligand contact to GTP. Gly-67 provides a ligand contact to S-adenosyl-L-methionine. Thr-94 serves as a coordination point for GTP. Ser-118 lines the S-adenosyl-L-methionine pocket. Lys-155 contributes to the GTP binding site. Met-189 contributes to the S-adenosyl-L-methionine binding site. [4Fe-4S] cluster is bound by residues Cys-249 and Cys-252. Position 254–256 (254–256) interacts with GTP; sequence RIR. Position 266 (Cys-266) interacts with [4Fe-4S] cluster.

It belongs to the radical SAM superfamily. MoaA family. In terms of assembly, monomer and homodimer. [4Fe-4S] cluster serves as cofactor.

It carries out the reaction GTP + AH2 + S-adenosyl-L-methionine = (8S)-3',8-cyclo-7,8-dihydroguanosine 5'-triphosphate + 5'-deoxyadenosine + L-methionine + A + H(+). The protein operates within cofactor biosynthesis; molybdopterin biosynthesis. Functionally, catalyzes the cyclization of GTP to (8S)-3',8-cyclo-7,8-dihydroguanosine 5'-triphosphate. The chain is GTP 3',8-cyclase from Alkaliphilus metalliredigens (strain QYMF).